The following is a 108-amino-acid chain: Monothiol bacilliredoxin BrxC (108 aa).

Residue cysteine 31 is modified to S-bacillithiol cysteine disulfide.

Interacts with AbrB, BdhA, Bdr, BrxB, FolD, GapA, GapB, GatA, PfkA, PyrAA, PyrAB, PyrE, PyrG, PyrH, RpsB, RpsK, RpsL, SalA, SucC, Tuf and YtsJ. Post-translationally, cys can react with bacillithiol (BSH) to form mixed disulfides. S-bacillithiolation protects Cys residues against overoxidation by acting as a redox switch in response to oxidative stress.

Functionally, S-bacillithiolation is the formation of mixed disulfide bonds between protein thiols and the general thiol reductant bacillithiol (BSH) under oxidative stress. BSH is an equivalent of glutathione (GSH) in Firmicutes. This protein is a monothiol bacilliredoxin, which debacillithiolates (removes BSH) the S-bacillithiolated glyceraldehyde-3-phosphate dehydrogenases (GAPDHs) GapA and GapB in vivo and probably a number of other oxidized cytosolic proteins. Debacillithiolates the S-bacillithiolated Bdr (Bdr-SSB) and BrxB (BrxB-SSB) in vitro. Involved in maintaining redox homeostasis in response to disulfide stress conditions. In Bacillus subtilis (strain 168), this protein is Monothiol bacilliredoxin BrxC.